The following is a 396-amino-acid chain: Elongation factor Tu (396 aa).

In terms of domain architecture, tr-type G spans 10 to 205; it reads KPHVNIGTIG…AVDSYIPTPE (196 aa). The segment at 19-26 is G1; it reads GHVDHGKT. 19-26 serves as a coordination point for GTP; the sequence is GHVDHGKT. Thr26 is a binding site for Mg(2+). Residues 60-64 form a G2 region; the sequence is GITIN. A G3 region spans residues 81–84; sequence DCPG. GTP contacts are provided by residues 81 to 85 and 136 to 139; these read DCPGH and NKCD. The tract at residues 136–139 is G4; the sequence is NKCD. The interval 174 to 176 is G5; it reads SAK.

Belongs to the TRAFAC class translation factor GTPase superfamily. Classic translation factor GTPase family. EF-Tu/EF-1A subfamily. Monomer.

It is found in the cytoplasm. The enzyme catalyses GTP + H2O = GDP + phosphate + H(+). GTP hydrolase that promotes the GTP-dependent binding of aminoacyl-tRNA to the A-site of ribosomes during protein biosynthesis. The chain is Elongation factor Tu from Brevibacillus brevis (strain 47 / JCM 6285 / NBRC 100599).